Reading from the N-terminus, the 879-residue chain is JmjC domain-containing histone demethylation protein 1 (879 aa).

Disordered regions lie at residues 1 to 45 (MSEQ…EEGK), 117 to 212 (STSP…PKRK), and 407 to 449 (KDVK…EGLK). The PHD-type zinc finger occupies 23–116 (PEPCPLCRET…KWYCAPCLAR (94 aa)). Composition is skewed to basic and acidic residues over residues 183 to 192 (IDMKSEREQQ) and 407 to 433 (KDVK…HLTE). Residues 416–598 (NDSRESSEIR…TQLRLRQIEI (183 aa)) form the JmjC domain. Residue Thr-472 participates in substrate binding. The Fe cation site is built by His-475 and Asp-477. A substrate-binding site is contributed by Lys-492. His-566 is a binding site for Fe cation. Residues 763–879 (HPPAWSENRQ…KVEEDMDIDH (117 aa)) are disordered. A compositionally biased stretch (polar residues) spans 769 to 782 (ENRQSPQIETTTVQ). Low complexity predominate over residues 786-818 (PSTSSSDAISGSGPGASPGASANGGANENEQAE). Residues 848-864 (FVEKKTVWGPKLDKEKI) show a composition bias toward basic and acidic residues.

Belongs to the JHDM1 histone demethylase family. It depends on Fe(2+) as a cofactor.

The protein resides in the nucleus. It catalyses the reaction N(6),N(6)-dimethyl-L-lysyl(36)-[histone H3] + 2 2-oxoglutarate + 2 O2 = L-lysyl(36)-[histone H3] + 2 formaldehyde + 2 succinate + 2 CO2. Histone demethylase that specifically demethylates 'Lys-36' of histone H3, thereby playing a central role in histone code. This is JmjC domain-containing histone demethylation protein 1 (JHD1) from Cryptococcus neoformans var. neoformans serotype D (strain B-3501A) (Filobasidiella neoformans).